Consider the following 453-residue polypeptide: Ribosomal protein uS12 methylthiotransferase RimO (453 aa).

The MTTase N-terminal domain occupies 9-124 (PKVGFVSLGC…VMEAVHTHLP (116 aa)). [4Fe-4S] cluster contacts are provided by Cys18, Cys54, Cys83, Cys155, Cys159, and Cys162. Positions 141 to 382 (LTPKHYAYLK…MEVAERVSAR (242 aa)) constitute a Radical SAM core domain. A TRAM domain is found at 385-453 (QRKVGKTLRV…ADGHDLWGEV (69 aa)).

This sequence belongs to the methylthiotransferase family. RimO subfamily. [4Fe-4S] cluster serves as cofactor.

It is found in the cytoplasm. It carries out the reaction L-aspartate(89)-[ribosomal protein uS12]-hydrogen + (sulfur carrier)-SH + AH2 + 2 S-adenosyl-L-methionine = 3-methylsulfanyl-L-aspartate(89)-[ribosomal protein uS12]-hydrogen + (sulfur carrier)-H + 5'-deoxyadenosine + L-methionine + A + S-adenosyl-L-homocysteine + 2 H(+). Functionally, catalyzes the methylthiolation of an aspartic acid residue of ribosomal protein uS12. This Ralstonia nicotianae (strain ATCC BAA-1114 / GMI1000) (Ralstonia solanacearum) protein is Ribosomal protein uS12 methylthiotransferase RimO.